A 180-amino-acid polypeptide reads, in one-letter code: Ribulose bisphosphate carboxylase small subunit 1A, chloroplastic (180 aa).

The transit peptide at 1–54 (MASSMLSSATMVASPAQATMVAPFNGLKSSAAFPATRKANNDITSITSNGGRVN) directs the protein to the chloroplast. Serine 113 is subject to Phosphoserine.

The protein belongs to the RuBisCO small chain family. As to quaternary structure, heterohexadecamer of 8 large and 8 small subunits.

The protein resides in the plastid. The protein localises to the chloroplast membrane. It is found in the chloroplast stroma. In terms of biological role, ruBisCO catalyzes two reactions: the carboxylation of D-ribulose 1,5-bisphosphate, the primary event in carbon dioxide fixation, as well as the oxidative fragmentation of the pentose substrate. Both reactions occur simultaneously and in competition at the same active site. Although the small subunit is not catalytic it is essential for maximal activity. This is Ribulose bisphosphate carboxylase small subunit 1A, chloroplastic (RBCS-1A) from Arabidopsis thaliana (Mouse-ear cress).